The primary structure comprises 38 residues: Large ribosomal subunit protein bL36A (38 aa).

It belongs to the bacterial ribosomal protein bL36 family.

The chain is Large ribosomal subunit protein bL36A from Pseudomonas aeruginosa (strain UCBPP-PA14).